Here is a 455-residue protein sequence, read N- to C-terminus: Putative RNA polymerase II subunit B1 CTD phosphatase rpap-2 (455 aa).

Residues glutamate 36–glycine 121 form an RTR1-type zinc finger. Cysteine 59, cysteine 64, cysteine 97, and cysteine 101 together coordinate Zn(2+).

This sequence belongs to the RPAP2 family.

Its subcellular location is the nucleus. It catalyses the reaction O-phospho-L-seryl-[protein] + H2O = L-seryl-[protein] + phosphate. It carries out the reaction O-phospho-L-threonyl-[protein] + H2O = L-threonyl-[protein] + phosphate. Its function is as follows. Putative RNA polymerase II subunit B1 C-terminal domain (CTD) phosphatase involved in RNA polymerase II transcription regulation. The chain is Putative RNA polymerase II subunit B1 CTD phosphatase rpap-2 from Caenorhabditis elegans.